The primary structure comprises 345 residues: Phosphate acyltransferase (345 aa).

The protein belongs to the PlsX family. Homodimer. Probably interacts with PlsY.

Its subcellular location is the cytoplasm. It catalyses the reaction a fatty acyl-[ACP] + phosphate = an acyl phosphate + holo-[ACP]. The protein operates within lipid metabolism; phospholipid metabolism. Catalyzes the reversible formation of acyl-phosphate (acyl-PO(4)) from acyl-[acyl-carrier-protein] (acyl-ACP). This enzyme utilizes acyl-ACP as fatty acyl donor, but not acyl-CoA. The chain is Phosphate acyltransferase from Levilactobacillus brevis (strain ATCC 367 / BCRC 12310 / CIP 105137 / JCM 1170 / LMG 11437 / NCIMB 947 / NCTC 947) (Lactobacillus brevis).